A 396-amino-acid polypeptide reads, in one-letter code: L-lactate dehydrogenase (396 aa).

Residues 1–380 (MIISAASDYR…TQDSLVQGLG (380 aa)) form the FMN hydroxy acid dehydrogenase domain. Tyrosine 24 is a substrate binding site. Residues serine 106 and glutamine 127 each coordinate FMN. Residue tyrosine 129 participates in substrate binding. Threonine 155 contributes to the FMN binding site. Arginine 164 is a binding site for substrate. Lysine 251 is a binding site for FMN. Catalysis depends on histidine 275, which acts as the Proton acceptor. Residue arginine 278 participates in substrate binding. 306–330 (DSGIRNGLDVVRMIALGADTVLLGR) contacts FMN.

This sequence belongs to the FMN-dependent alpha-hydroxy acid dehydrogenase family. It depends on FMN as a cofactor.

The protein localises to the cell inner membrane. The enzyme catalyses (S)-lactate + A = pyruvate + AH2. Functionally, catalyzes the conversion of L-lactate to pyruvate. Is coupled to the respiratory chain. In Escherichia coli O127:H6 (strain E2348/69 / EPEC), this protein is L-lactate dehydrogenase.